Reading from the N-terminus, the 202-residue chain is LexA repressor (202 aa).

The H-T-H motif DNA-binding region spans 29 to 49 (VREICEATGLKSTSTVHGHLT). Residues S126 and K163 each act as for autocatalytic cleavage activity in the active site.

The protein belongs to the peptidase S24 family. As to quaternary structure, homodimer.

It carries out the reaction Hydrolysis of Ala-|-Gly bond in repressor LexA.. Its function is as follows. Represses a number of genes involved in the response to DNA damage (SOS response), including recA and lexA. In the presence of single-stranded DNA, RecA interacts with LexA causing an autocatalytic cleavage which disrupts the DNA-binding part of LexA, leading to derepression of the SOS regulon and eventually DNA repair. In Caldicellulosiruptor saccharolyticus (strain ATCC 43494 / DSM 8903 / Tp8T 6331), this protein is LexA repressor.